Reading from the N-terminus, the 250-residue chain is Phosphonates import ATP-binding protein PhnC (250 aa).

The ABC transporter domain occupies 2-247 (IVFNNVNKVW…KLDAQAMKKI (246 aa)). Position 35–42 (35–42 (GLSGAGKT)) interacts with ATP.

It belongs to the ABC transporter superfamily. Phosphonates importer (TC 3.A.1.9.1) family. The complex is composed of two ATP-binding proteins (PhnC), two transmembrane proteins (PhnE) and a solute-binding protein (PhnD).

It localises to the cell membrane. It carries out the reaction phosphonate(out) + ATP + H2O = phosphonate(in) + ADP + phosphate + H(+). In terms of biological role, part of the ABC transporter complex PhnCDE involved in phosphonates import. Responsible for energy coupling to the transport system. In Mycoplasma mycoides subsp. mycoides SC (strain CCUG 32753 / NCTC 10114 / PG1), this protein is Phosphonates import ATP-binding protein PhnC.